Consider the following 504-residue polypeptide: Protein anon-37Cs (504 aa).

Low levels seen in adult heads, thorax, abdomen and ovaries, high levels in testes.

Its subcellular location is the cytoplasm. Functionally, has a non-vital function. This Drosophila melanogaster (Fruit fly) protein is Protein anon-37Cs (anon-37Cs).